We begin with the raw amino-acid sequence, 342 residues long: Foldase protein PrsA (342 aa).

The N-terminal stretch at 1–22 (MVSVKKIVASALVGVLMFSAVG) is a signal peptide. C23 carries the N-palmitoyl cysteine lipid modification. The S-diacylglycerol cysteine moiety is linked to residue C23. Residues 190–284 (AKGVLARHLL…FGYHIIQAGA (95 aa)) enclose the PpiC domain.

Belongs to the PrsA family.

It is found in the cell membrane. It catalyses the reaction [protein]-peptidylproline (omega=180) = [protein]-peptidylproline (omega=0). Functionally, plays a major role in protein secretion by helping the post-translocational extracellular folding of several secreted proteins. The sequence is that of Foldase protein PrsA from Clostridium perfringens (strain SM101 / Type A).